Here is a 764-residue protein sequence, read N- to C-terminus: 5-methyltetrahydropteroyltriglutamate--homocysteine methyltransferase (764 aa).

5-methyltetrahydropteroyltri-L-glutamate is bound by residues 16–19 (RELK) and Lys-115. L-homocysteine is bound by residues 435–437 (IGS) and Glu-488. Residues 435–437 (IGS) and Glu-488 each bind L-methionine. 5-methyltetrahydropteroyltri-L-glutamate contacts are provided by residues 519–520 (RC) and Trp-565. Asp-603 is a binding site for L-homocysteine. Asp-603 contributes to the L-methionine binding site. Glu-609 provides a ligand contact to 5-methyltetrahydropteroyltri-L-glutamate. Residues His-645, Cys-647, and Glu-669 each contribute to the Zn(2+) site. His-698 (proton donor) is an active-site residue. Cys-730 is a binding site for Zn(2+).

The protein belongs to the vitamin-B12 independent methionine synthase family. The cofactor is Zn(2+).

It carries out the reaction 5-methyltetrahydropteroyltri-L-glutamate + L-homocysteine = tetrahydropteroyltri-L-glutamate + L-methionine. It functions in the pathway amino-acid biosynthesis; L-methionine biosynthesis via de novo pathway; L-methionine from L-homocysteine (MetE route): step 1/1. In terms of biological role, catalyzes the transfer of a methyl group from 5-methyltetrahydrofolate to homocysteine resulting in methionine formation. In Burkholderia pseudomallei (strain 668), this protein is 5-methyltetrahydropteroyltriglutamate--homocysteine methyltransferase.